The primary structure comprises 429 residues: Adenylosuccinate synthetase (429 aa).

GTP is bound by residues 12 to 18 (GDEGKGK) and 40 to 42 (GHT). Catalysis depends on Asp-13, which acts as the Proton acceptor. Mg(2+) is bound by residues Asp-13 and Gly-40. IMP contacts are provided by residues 13–16 (DEGK), 38–41 (NAGH), Thr-128, Arg-142, Gln-223, Thr-238, and Arg-302. Catalysis depends on His-41, which acts as the Proton donor. Substrate is bound at residue 298–304 (VNTGRPR). Residues Arg-304, 330-332 (KLD), and 412-414 (GVG) each bind GTP.

This sequence belongs to the adenylosuccinate synthetase family. Homodimer. Mg(2+) is required as a cofactor.

The protein localises to the cytoplasm. The enzyme catalyses IMP + L-aspartate + GTP = N(6)-(1,2-dicarboxyethyl)-AMP + GDP + phosphate + 2 H(+). It functions in the pathway purine metabolism; AMP biosynthesis via de novo pathway; AMP from IMP: step 1/2. In terms of biological role, plays an important role in the de novo pathway of purine nucleotide biosynthesis. Catalyzes the first committed step in the biosynthesis of AMP from IMP. This is Adenylosuccinate synthetase from Arthrobacter sp. (strain FB24).